The following is an 839-amino-acid chain: Translation initiation factor IF-2 (839 aa).

Composition is skewed to basic and acidic residues over residues 1 to 12 and 57 to 67; these read MSDNEIKNETPK and AEAKAQEKQAA. Disordered regions lie at residues 1–21 and 57–244; these read MSDNEIKNETPKKLSLQRRTK and AEAK…GASL. Low complexity predominate over residues 68–90; sequence EKAAQAQTEAKAQTEQACTTKKT. 3 stretches are compositionally biased toward basic and acidic residues: residues 104–167, 185–199, and 212–233; these read PKTE…REET, READRDHDRRSEGNR, and GGREDDKNERNSDRRNAKDIKG. One can recognise a tr-type G domain in the interval 338 to 508; that stretch reads TRAPVVTIMG…ILQSEVLELT (171 aa). Residues 347-354 form a G1 region; that stretch reads GHVDHGKT. 347 to 354 is a GTP binding site; it reads GHVDHGKT. The segment at 372–376 is G2; it reads GITQH. The tract at residues 394-397 is G3; sequence DTPG. Residues 394–398 and 448–451 contribute to the GTP site; these read DTPGH and NKID. The G4 stretch occupies residues 448–451; that stretch reads NKID. Positions 484–486 are G5; the sequence is SAK.

This sequence belongs to the TRAFAC class translation factor GTPase superfamily. Classic translation factor GTPase family. IF-2 subfamily.

It localises to the cytoplasm. One of the essential components for the initiation of protein synthesis. Protects formylmethionyl-tRNA from spontaneous hydrolysis and promotes its binding to the 30S ribosomal subunits. Also involved in the hydrolysis of GTP during the formation of the 70S ribosomal complex. This is Translation initiation factor IF-2 from Haemophilus ducreyi (strain 35000HP / ATCC 700724).